Reading from the N-terminus, the 461-residue chain is Dihydrolipoyl dehydrogenase (461 aa).

Residues 34 to 42 (EEDQAGGTC), lysine 51, and glycine 114 each bind FAD. Cysteine 42 and cysteine 47 are oxidised to a cystine. Residues 177-181 (GGGVI), glutamate 200, and 261-264 (AIGR) contribute to the NAD(+) site. FAD is bound by residues aspartate 304 and alanine 312. The Proton acceptor role is filled by histidine 436.

Belongs to the class-I pyridine nucleotide-disulfide oxidoreductase family. FAD is required as a cofactor.

It localises to the cytoplasm. It catalyses the reaction N(6)-[(R)-dihydrolipoyl]-L-lysyl-[protein] + NAD(+) = N(6)-[(R)-lipoyl]-L-lysyl-[protein] + NADH + H(+). Its function is as follows. The branched-chain alpha-keto dehydrogenase complex catalyzes the overall conversion of alpha-keto acids to acyl-CoA and CO(2). It contains multiple copies of 3 enzymatic components: branched-chain alpha-keto acid decarboxylase (E1), lipoamide acyltransferase (E2) and lipoamide dehydrogenase (E3). This Chlamydia pneumoniae (Chlamydophila pneumoniae) protein is Dihydrolipoyl dehydrogenase (lpdA).